The primary structure comprises 178 residues: Nicotinamide-nucleotide adenylyltransferase (178 aa).

This sequence belongs to the archaeal NMN adenylyltransferase family. Homohexamer.

It localises to the cytoplasm. The enzyme catalyses beta-nicotinamide D-ribonucleotide + ATP + H(+) = diphosphate + NAD(+). The protein operates within cofactor biosynthesis; NAD(+) biosynthesis; NAD(+) from nicotinamide D-ribonucleotide: step 1/1. In Methanothermobacter thermautotrophicus (strain ATCC 29096 / DSM 1053 / JCM 10044 / NBRC 100330 / Delta H) (Methanobacterium thermoautotrophicum), this protein is Nicotinamide-nucleotide adenylyltransferase.